Here is an 834-residue protein sequence, read N- to C-terminus: Translation factor GUF1 homolog, mitochondrial (834 aa).

A mitochondrion-targeting transit peptide spans Met1–Tyr66. One can recognise a tr-type G domain in the interval Ala129–Arg314. GTP is bound by residues Ala138–Thr145, Asp205–His209, and Thr259–Asp262. The tract at residues Ala475–Val507 is disordered. Residues Ala488–Val507 are compositionally biased toward low complexity.

The protein belongs to the TRAFAC class translation factor GTPase superfamily. Classic translation factor GTPase family. LepA subfamily.

The protein resides in the mitochondrion inner membrane. The catalysed reaction is GTP + H2O = GDP + phosphate + H(+). In terms of biological role, promotes mitochondrial protein synthesis. May act as a fidelity factor of the translation reaction, by catalyzing a one-codon backward translocation of tRNAs on improperly translocated ribosomes. Binds to mitochondrial ribosomes in a GTP-dependent manner. In Leishmania major, this protein is Translation factor GUF1 homolog, mitochondrial.